A 1006-amino-acid chain; its full sequence is D-2-hydroxyglutarate dehydrogenase (1006 aa).

In terms of domain architecture, FAD-binding PCMH-type spans 47–279; that stretch reads YQRLPQAAVF…VEAKLNVLPI (233 aa). (R)-2-hydroxyglutarate contacts are provided by Arg-397 and His-495. Residues 655-687 form the 4Fe-4S ferredoxin-type domain; sequence SHEVYDAMAGCLACKSCAGQCPIKVNVPDFRSR. 4 residues coordinate [4Fe-4S] cluster: Cys-665, Cys-668, Cys-671, and Cys-675.

This sequence in the N-terminal section; belongs to the FAD-binding oxidoreductase/transferase type 4 family. Requires [4Fe-4S] cluster as cofactor. FAD is required as a cofactor.

The enzyme catalyses (R)-2-hydroxyglutarate + A = 2-oxoglutarate + AH2. The protein operates within amino-acid degradation. Catalyzes the oxidation of D-2-hydroxyglutarate (D-2-HGA) to 2-oxoglutarate. Is involved in a D-lysine catabolic pathway. This Pseudomonas putida (strain ATCC 47054 / DSM 6125 / CFBP 8728 / NCIMB 11950 / KT2440) protein is D-2-hydroxyglutarate dehydrogenase.